A 194-amino-acid polypeptide reads, in one-letter code: Small ribosomal subunit protein uS11m (194 aa).

Belongs to the universal ribosomal protein uS11 family. As to quaternary structure, component of the mitochondrial small ribosomal subunit (mt-SSU). Mature mammalian 55S mitochondrial ribosomes consist of a small (28S) and a large (39S) subunit. The 28S small subunit contains a 12S ribosomal RNA (12S mt-rRNA) and 30 different proteins. The 39S large subunit contains a 16S rRNA (16S mt-rRNA), a copy of mitochondrial valine transfer RNA (mt-tRNA(Val)), which plays an integral structural role, and 52 different proteins.

Its subcellular location is the mitochondrion. In Homo sapiens (Human), this protein is Small ribosomal subunit protein uS11m (MRPS11).